The following is a 566-amino-acid chain: Potassium-transporting ATPase potassium-binding subunit (566 aa).

12 helical membrane passes run 6 to 26 (VALLTSYMLVLLLLAWPLGIA), 60 to 80 (AAAILVFNLLGAALLFLLMLF), 128 to 148 (LGLTVHNFLSAANGIAVAFVL), 167 to 187 (IWRITVYLLLPLSVIYALFLA), 247 to 267 (LTNFVQMVSILLIPAALCICF), 276 to 296 (VGSALLWTMGIMLSVAALLIM), 331 to 351 (FGLWASSLFATITTAASCGAV), 361 to 381 (LGGLIPMVLMQLGEVVFGGVG), 383 to 403 (GWYGMMLFVFLTVFLAGLMIG), 423 to 443 (IGLLIPPALVLLGTALAVILP), 492 to 512 (LMFVGRFGVMLPVLAIAGALI), and 530 to 550 (LFVGMLIGVVLLIGALTFIPA).

Belongs to the KdpA family. The system is composed of three essential subunits: KdpA, KdpB and KdpC.

It is found in the cell inner membrane. Part of the high-affinity ATP-driven potassium transport (or Kdp) system, which catalyzes the hydrolysis of ATP coupled with the electrogenic transport of potassium into the cytoplasm. This subunit binds the periplasmic potassium ions and delivers the ions to the membrane domain of KdpB through an intramembrane tunnel. The polypeptide is Potassium-transporting ATPase potassium-binding subunit (Tolumonas auensis (strain DSM 9187 / NBRC 110442 / TA 4)).